Consider the following 205-residue polypeptide: GTP-binding protein yptV5 (205 aa).

Residue 15–22 (GDSGVGKT) coordinates GTP. The short motif at 37–45 (YKATIGADF) is the Effector region element. Residues 63 to 67 (DTAGQ) and 125 to 128 (NKID) each bind GTP. 2 S-geranylgeranyl cysteine lipidation sites follow: Cys-204 and Cys-205.

It belongs to the small GTPase superfamily. Rab family.

It localises to the cell membrane. Protein transport. Probably involved in vesicular traffic. This chain is GTP-binding protein yptV5 (YPTV5), found in Volvox carteri (Green alga).